The sequence spans 156 residues: 2-C-methyl-D-erythritol 2,4-cyclodiphosphate synthase (156 aa).

A divalent metal cation-binding residues include Asp-10 and His-12. 4-CDP-2-C-methyl-D-erythritol 2-phosphate-binding positions include 10 to 12 (DSH) and 36 to 37 (HS). Residue His-44 coordinates a divalent metal cation. Residues 58 to 60 (DIG) and 63 to 67 (FKDTD) each bind 4-CDP-2-C-methyl-D-erythritol 2-phosphate.

The protein belongs to the IspF family. As to quaternary structure, homotrimer. The cofactor is a divalent metal cation.

It catalyses the reaction 4-CDP-2-C-methyl-D-erythritol 2-phosphate = 2-C-methyl-D-erythritol 2,4-cyclic diphosphate + CMP. The protein operates within isoprenoid biosynthesis; isopentenyl diphosphate biosynthesis via DXP pathway; isopentenyl diphosphate from 1-deoxy-D-xylulose 5-phosphate: step 4/6. Functionally, involved in the biosynthesis of isopentenyl diphosphate (IPP) and dimethylallyl diphosphate (DMAPP), two major building blocks of isoprenoid compounds. Catalyzes the conversion of 4-diphosphocytidyl-2-C-methyl-D-erythritol 2-phosphate (CDP-ME2P) to 2-C-methyl-D-erythritol 2,4-cyclodiphosphate (ME-CPP) with a corresponding release of cytidine 5-monophosphate (CMP). This Aquifex aeolicus (strain VF5) protein is 2-C-methyl-D-erythritol 2,4-cyclodiphosphate synthase.